Consider the following 363-residue polypeptide: tRNA U34 carboxymethyltransferase (363 aa).

Residues K101, W134, K139, G159, 181-183 (DPS), 221-222 (LE), M237, Y241, and R356 contribute to the carboxy-S-adenosyl-L-methionine site.

It belongs to the class I-like SAM-binding methyltransferase superfamily. CmoB family. As to quaternary structure, homotetramer.

It catalyses the reaction carboxy-S-adenosyl-L-methionine + 5-hydroxyuridine(34) in tRNA = 5-carboxymethoxyuridine(34) in tRNA + S-adenosyl-L-homocysteine + H(+). Its function is as follows. Catalyzes carboxymethyl transfer from carboxy-S-adenosyl-L-methionine (Cx-SAM) to 5-hydroxyuridine (ho5U) to form 5-carboxymethoxyuridine (cmo5U) at position 34 in tRNAs. The protein is tRNA U34 carboxymethyltransferase of Psychrobacter cryohalolentis (strain ATCC BAA-1226 / DSM 17306 / VKM B-2378 / K5).